The following is a 184-amino-acid chain: Large ribosomal subunit protein uL6 (184 aa).

Belongs to the universal ribosomal protein uL6 family. In terms of assembly, part of the 50S ribosomal subunit.

Its function is as follows. This protein binds to the 23S rRNA, and is important in its secondary structure. It is located near the subunit interface in the base of the L7/L12 stalk, and near the tRNA binding site of the peptidyltransferase center. The sequence is that of Large ribosomal subunit protein uL6 from Mycoplasma pneumoniae (strain ATCC 29342 / M129 / Subtype 1) (Mycoplasmoides pneumoniae).